We begin with the raw amino-acid sequence, 220 residues long: Acetate CoA-transferase subunit alpha (220 aa).

Residue 24-30 coordinates CoA; that stretch reads GGFMGIG.

This sequence belongs to the 3-oxoacid CoA-transferase subunit A family. Heterotetramer composed of two alpha subunits (AtoD) and two beta subunits (AtoA).

The protein localises to the cytoplasm. The catalysed reaction is an acyl-CoA + acetate = a carboxylate + acetyl-CoA. The enzyme catalyses acetoacetate + acetyl-CoA = acetoacetyl-CoA + acetate. It carries out the reaction butanoate + acetyl-CoA = butanoyl-CoA + acetate. It catalyses the reaction acetoacetate + butanoyl-CoA = acetoacetyl-CoA + butanoate. It functions in the pathway lipid metabolism; short-chain fatty acid metabolism. With respect to regulation, inhibited by p-chloromercuribenzoate. Functionally, coenzyme A transferase which is involved in short-chain fatty acid degradation and catalyzes the activation of short-chain fatty acids to their respective CoA thiolesters. During acetoacetate degradation, catalyzes the transfer of CoA from acetyl-CoA to acetoacetate by a mechanism involving a covalent enzyme-CoA compound as a reaction intermediate. Utilizes a variety of short chain acyl-CoA and carboxylic acid substrates but exhibits maximal activity with normal and 3-keto substrates. This Escherichia coli (strain K12) protein is Acetate CoA-transferase subunit alpha.